Reading from the N-terminus, the 591-residue chain is PDZ and LIM domain protein 5 (591 aa).

Position 2 is an N-acetylserine (Ser-2). Position 2 is a phosphoserine (Ser-2). A PDZ domain is found at 2–85 (SNYNVSLVGP…SLNMTLQRAS (84 aa)). At Lys-89 the chain carries N6-acetyllysine; alternate. Lys-89 carries the N6-succinyllysine; alternate modification. Residue Lys-89 forms a Glycyl lysine isopeptide (Lys-Gly) (interchain with G-Cter in SUMO2); alternate linkage. Ser-111, Ser-134, and Ser-137 each carry phosphoserine. Disordered stretches follow at residues 125–240 (YNKV…GPPR) and 255–334 (THSD…SNRP). Residues 134–143 (SVSSPKVTSI) are compositionally biased toward polar residues. Over residues 144-161 (PSPSSAFTPAHAATSSHA) the composition is skewed to low complexity. A compositionally biased stretch (pro residues) spans 162–174 (SPPPVAAVTPPPL). Composition is skewed to polar residues over residues 183–195 (ANPS…SPPN) and 207–217 (PTVTSVCSESA). Residues Ser-228 and Ser-260 each carry the phosphoserine modification. Basic and acidic residues-rich tracts occupy residues 258–273 (DASK…DWRP) and 293–304 (EHLKESENDNAK). A compositionally biased stretch (low complexity) spans 310-329 (PEPSQQSASPLSAAESLESP). Phosphoserine occurs at positions 313 and 318. Lys-346 carries the N6-acetyllysine modification. The disordered stretch occupies residues 348 to 398 (VGSTSVKSPSWQRPNQAAPSTGRISNSASSSGTGAPMKPAVGPPQPSDQDT). Over residues 349–380 (GSTSVKSPSWQRPNQAAPSTGRISNSASSSGT) the composition is skewed to polar residues. Phosphoserine occurs at positions 355 and 357. LIM zinc-binding domains follow at residues 413–472 (PMCA…FFAP), 472–531 (PECG…LFGT), and 531–591 (TICR…SVNF).

As to quaternary structure, interacts with various PKC isoforms through the LIM domains. Interacts with actin and alpha-actinin through the PDZ domain. Interacts (via LIM domains) with SIPA1L1/SPAR; this interaction may occur preferentially with isoform 1. As to expression, detected in brain, in neurons, including in hippocampal neurons, and glial cells (at protein level). Detected in heart and skeletal muscle.

The protein localises to the postsynaptic density. The protein resides in the presynapse. Its subcellular location is the postsynapse. It localises to the cytoplasm. It is found in the cytosol. Functionally, may play an important role in the heart development by scaffolding PKC to the Z-disk region. May play a role in the regulation of cardiomyocyte expansion. Isoforms lacking the LIM domains may negatively modulate the scaffolding activity of isoform 1. Overexpression promotes the development of heart hypertrophy. Contributes to the regulation of dendritic spine morphogenesis in neurons. May be required to restrain postsynaptic growth of excitatory synapses. Isoform 1, but not isoform 2, expression favors spine thinning and elongation. The polypeptide is PDZ and LIM domain protein 5 (Pdlim5) (Rattus norvegicus (Rat)).